Consider the following 378-residue polypeptide: Stimulator of interferon genes protein (378 aa).

2 helical membrane passes run 21–41 and 46–66; these read AAFVLLSTCLAALWELGEPAD and WLVLHLASEQLGLLFKGLCSL. Residues C88 and C91 are each lipidated (S-palmitoyl cysteine). Helical transmembrane passes span 89-109 and 114-134; these read LGCPIRCGVLLLLSCYCYTFL and GLPFAWIVALLGLSQALNILL. The cyclic dinucleotide-binding domain (CBD) stretch occupies residues 153-339; the sequence is FNVAHGLAWS…KHLKQEEKEE (187 aa). Residues S162, Y167, R238, and T263 each contribute to the 2',3'-cGAMP site. 3',3'-c-di-GMP-binding positions include S162, Y167, 238 to 241, and T263; that span reads RVYT. 2',3'-cUAMP contacts are provided by Y167, R238, and T263. Residues 339–378 are C-terminal tail (CTT); it reads EVTVGTMGSSGVLESSTLDKEPQLLISGMDQPLPLRTDVF. Position 354 is a phosphoserine (S354). The residue at position 355 (T355) is a Phosphothreonine. The pLxIS motif motif lies at 362-365; it reads LLIS. Position 365 is a phosphoserine; by TBK1 (S365).

The protein belongs to the STING family. Homodimer; forms a homodimer in absence of cyclic nucleotide (c-di-GMP or cGAMP). Homotetramer; in presence of cyclic nucleotide (c-di-GMP or cGAMP), forms tetramers and higher-order oligomers through side-by-side packing. Interacts (when phosphorylated) with IRF3; following activation and phosphorylation on the pLxIS motif by TBK1, recruits IRF3. Interacts with TBK1; when homodimer, leading to subsequent production of IFN-beta. Phosphorylation by TBK1 leads to activation and production of IFN-beta. Following cyclic nucleotide (c-di-GMP or cGAMP)-binding, activation and translocation from the endoplasmic reticulum, STING1 is phosphorylated by TBK1 at Ser-365 in the pLxIS motif. The phosphorylated pLxIS motif constitutes an IRF3-binding motif, leading to recruitment of the transcription factor IRF3 to induce type-I interferons and other cytokines. In contrast, lacks phosphorylation site at position 357, leading to reduced production of type-I interferons and other cytokines.

It localises to the endoplasmic reticulum membrane. The protein resides in the cytoplasm. Its subcellular location is the perinuclear region. The protein localises to the endoplasmic reticulum-Golgi intermediate compartment membrane. It is found in the golgi apparatus membrane. It localises to the cytoplasmic vesicle. The protein resides in the autophagosome membrane. Its subcellular location is the mitochondrion outer membrane. The protein localises to the cell membrane. It catalyses the reaction H(+)(in) = H(+)(out). Its function is as follows. Facilitator of innate immune signaling that acts as a sensor of cytosolic DNA from bacteria and viruses and promotes low production of type I interferon (IFN-alpha and IFN-beta). Compared to other mammals, STING1-dependent type I interferon induction is strongly reduced in bats, suggesting that the cGAS-STING pathway promotes a limited inflammatory response. Innate immune response is triggered in response to non-CpG double-stranded DNA from viruses and bacteria delivered to the cytoplasm. Acts by binding cyclic dinucleotides: recognizes and binds cyclic di-GMP (c-di-GMP), a second messenger produced by bacteria, cyclic UMP-AMP (2',3'-cUAMP), and cyclic GMP-AMP (cGAMP), a messenger produced by CGAS in response to DNA virus in the cytosol. Upon binding to c-di-GMP, cUAMP or cGAMP, STING1 oligomerizes, translocates from the endoplasmic reticulum and is phosphorylated by TBK1 on the pLxIS motif, leading to recruitment and subsequent activation of the transcription factor IRF3 to induce expression of type I interferon and exert a potent anti-viral state. In addition to promote the production of type I interferons, plays a direct role in autophagy. Following cGAMP-binding, STING1 buds from the endoplasmic reticulum into COPII vesicles, which then form the endoplasmic reticulum-Golgi intermediate compartment (ERGIC). The ERGIC serves as the membrane source for WIPI2 recruitment and LC3 lipidation, leading to formation of autophagosomes that target cytosolic DNA or DNA viruses for degradation by the lysosome. Promotes autophagy by acting as a proton channel that directs proton efflux from the Golgi to facilitate MAP1LC3B/LC3B lipidation. The autophagy- and interferon-inducing activities can be uncoupled and autophagy induction is independent of TBK1 phosphorylation. The chain is Stimulator of interferon genes protein from Rhinolophus ferrumequinum (Greater horseshoe bat).